Reading from the N-terminus, the 218-residue chain is Ribose-5-phosphate isomerase A (218 aa).

Substrate contacts are provided by residues 28–31, 81–84, and 94–97; these read TGST, DGAD, and KGGG. The active-site Proton acceptor is E103. Substrate is bound at residue K121.

This sequence belongs to the ribose 5-phosphate isomerase family. Homodimer.

The catalysed reaction is aldehydo-D-ribose 5-phosphate = D-ribulose 5-phosphate. The protein operates within carbohydrate degradation; pentose phosphate pathway; D-ribose 5-phosphate from D-ribulose 5-phosphate (non-oxidative stage): step 1/1. In terms of biological role, catalyzes the reversible conversion of ribose-5-phosphate to ribulose 5-phosphate. This chain is Ribose-5-phosphate isomerase A, found in Sodalis glossinidius (strain morsitans).